Here is a 282-residue protein sequence, read N- to C-terminus: MSAVAAMSWWQVISLAVVQGLTEFLPVSSSGHLAVVSRVFFSDDAGASFTAVTQLGTEAAVLVYFARDIVRILRAWFDGLVVTSHRNADYRLGWYVIIGTIPICVMGLLFKDEIRSGVRNLWVVATALVVFSGVIALAEYLGRQSRHVEQLTWRDGLVVGVAQTLALVPGVSRSGSTISAGLFLGLDRELAARFGFLLAIPAVFASGLFSLPDAFHPVTEGMSATGPQLLVATLIAFVVGLAAVSWFLRFLLRHSMYWFVGYRVVVGVVVLILLATGTVAAT.

Helical transmembrane passes span 90–110, 121–141, 165–185, 194–214, 228–248, and 256–276; these read YRLG…GLLF, LWVV…AEYL, LALV…LFLG, FGFL…LPDA, QLLV…SWFL, and MYWF…LLAT.

Belongs to the UppP family.

It is found in the cell membrane. It catalyses the reaction di-trans,octa-cis-undecaprenyl diphosphate + H2O = di-trans,octa-cis-undecaprenyl phosphate + phosphate + H(+). In terms of biological role, catalyzes the dephosphorylation of undecaprenyl diphosphate (UPP). Confers resistance to bacitracin. This Mycobacterium marinum (strain ATCC BAA-535 / M) protein is Undecaprenyl-diphosphatase.